The chain runs to 360 residues: Phospho-N-acetylmuramoyl-pentapeptide-transferase (360 aa).

Transmembrane regions (helical) follow at residues 21–41 (YLTL…LWLG), 73–93 (TMGG…WGDL), 94–114 (TNHY…IGWV), 145–165 (AVTL…VPLF), 168–188 (VVVP…VGSS), 199–219 (GLAI…AYAS), 236–256 (AGEL…FLWF), 263–283 (VFMG…VAVI), 288–308 (IVLF…MLQV), and 339–359 (IVRF…TLKI).

The protein belongs to the glycosyltransferase 4 family. MraY subfamily. The cofactor is Mg(2+).

The protein localises to the cell inner membrane. It catalyses the reaction UDP-N-acetyl-alpha-D-muramoyl-L-alanyl-gamma-D-glutamyl-meso-2,6-diaminopimeloyl-D-alanyl-D-alanine + di-trans,octa-cis-undecaprenyl phosphate = di-trans,octa-cis-undecaprenyl diphospho-N-acetyl-alpha-D-muramoyl-L-alanyl-D-glutamyl-meso-2,6-diaminopimeloyl-D-alanyl-D-alanine + UMP. It functions in the pathway cell wall biogenesis; peptidoglycan biosynthesis. Its function is as follows. Catalyzes the initial step of the lipid cycle reactions in the biosynthesis of the cell wall peptidoglycan: transfers peptidoglycan precursor phospho-MurNAc-pentapeptide from UDP-MurNAc-pentapeptide onto the lipid carrier undecaprenyl phosphate, yielding undecaprenyl-pyrophosphoryl-MurNAc-pentapeptide, known as lipid I. This is Phospho-N-acetylmuramoyl-pentapeptide-transferase from Chromohalobacter salexigens (strain ATCC BAA-138 / DSM 3043 / CIP 106854 / NCIMB 13768 / 1H11).